The following is a 104-amino-acid chain: N(4)-acetylcytidine amidohydrolase (104 aa).

The ASCH domain maps to 7–95 (MTFFERFETD…IQDIYPGISQ (89 aa)). The active-site Proton acceptor is the K22. The active-site Nucleophile is the T25. Residue E75 is the Proton donor of the active site.

The protein belongs to the N(4)-acetylcytidine amidohydrolase family.

The catalysed reaction is N(4)-acetylcytidine + H2O = cytidine + acetate + H(+). It catalyses the reaction N(4)-acetyl-2'-deoxycytidine + H2O = 2'-deoxycytidine + acetate + H(+). The enzyme catalyses N(4)-acetylcytosine + H2O = cytosine + acetate + H(+). Catalyzes the hydrolysis of N(4)-acetylcytidine (ac4C). The polypeptide is N(4)-acetylcytidine amidohydrolase (Vibrio atlanticus (strain LGP32) (Vibrio splendidus (strain Mel32))).